The sequence spans 303 residues: MEDYVKIEKIGEGTYGVVYKGRHKSTGQVVAMKKIRLESEEEGVPSTAVREVSLLQELKHPNVVRLLDVLMQESRLYLIFEFLSMDLKKYLDSIPSGQYMDPMLVKSYLYQILEGIYFCHRRRVLHRDLKPQNLLIDNKGVIKLADFGLSRAFGVPVRVYTHEVVTLWYRAPEVLLGSPRYSTPVDVWSTGTIFAELATKKPLFHGDSEIDQLFRIFRTLGTPNNDVWPDVESLPDYKSTFPKWKGGSLSSMVKNLDKNGLDLLAKMLIYNPPKRISAREAMTHPYFDDLDKSTLPAACINGV.

The 284-residue stretch at 4 to 287 (YVKIEKIGEG…AREAMTHPYF (284 aa)) folds into the Protein kinase domain. ATP-binding positions include 10-18 (IGEGTYGVV) and K33. T14 carries the post-translational modification Phosphothreonine. Y15 carries the phosphotyrosine; by wee1 and wee2 modification. The active-site Proton acceptor is the D128. A Phosphothreonine; by cak modification is found at T161.

The protein belongs to the protein kinase superfamily. CMGC Ser/Thr protein kinase family. CDC2/CDKX subfamily. As to quaternary structure, forms a stable but non-covalent complex with cyclin B in mature oocytes. Post-translationally, phosphorylation at Tyr-15 by wee1 and wee2 inhibits the protein kinase activity and acts negative regulator of entry into mitosis (G2 to M transition).

Its subcellular location is the nucleus. It localises to the cytoplasm. The protein localises to the cytoskeleton. It is found in the microtubule organizing center. The protein resides in the centrosome. The enzyme catalyses L-seryl-[protein] + ATP = O-phospho-L-seryl-[protein] + ADP + H(+). The catalysed reaction is L-threonyl-[protein] + ATP = O-phospho-L-threonyl-[protein] + ADP + H(+). It carries out the reaction [DNA-directed RNA polymerase] + ATP = phospho-[DNA-directed RNA polymerase] + ADP + H(+). Phosphorylation at Thr-14 or Tyr-15 inactivates the enzyme, while phosphorylation at Thr-161 activates it. Its function is as follows. Plays a key role in the control of the eukaryotic cell cycle by modulating the centrosome cycle as well as mitotic onset; promotes G2-M transition via association with multiple interphase cyclins. During G2 and early mitosis, CDC25A/B/C-mediated dephosphorylation activates CDK1/cyclin complexes which phosphorylate several substrates that trigger at least centrosome separation, Golgi dynamics, nuclear envelope breakdown and chromosome condensation. Once chromosomes are condensed and aligned at the metaphase plate, CDK1 activity is switched off by WEE1- and PKMYT1-mediated phosphorylation to allow sister chromatid separation, chromosome decondensation, reformation of the nuclear envelope and cytokinesis. Catalyzes lamin (LMNA, LMNB1 and LMNB2) phosphorylation at the onset of mitosis, promoting nuclear envelope breakdown. The chain is Cyclin-dependent kinase 1 (cdk1) from Oryzias curvinotus (Hynann ricefish).